A 259-amino-acid polypeptide reads, in one-letter code: MSDEETEQVEEQYEEEEEAQEEEVQEEAPEPEEVQEEEKPRPKLTAPKIPEGEKVDFDDIQKKRQNKDLMELQALIDSHFEARKKEEEELIALKERIEKRRAERAEQQRIRAEKERERQNRLAEEKARREEEDAKRRAEDDLKKKKALSSMGANYSSYLAKADQKRGKKQTAREMKKKILAERRKPLNIDHLSDDKLRDKAKELWDTLYQLETDKFEFGEKLKRQKYDITTLRSRIDQAQKHSKKAGATAKGKVGGRWK.

Over residues 1–36 the composition is skewed to acidic residues; that stretch reads MSDEETEQVEEQYEEEEEAQEEEVQEEAPEPEEVQE. Positions 1-62 are disordered; it reads MSDEETEQVE…EKVDFDDIQK (62 aa). At serine 2 the chain carries N-acetylserine. Position 2 is a phosphoserine (serine 2). Over residues 50–62 the composition is skewed to basic and acidic residues; it reads PEGEKVDFDDIQK. A Phosphoserine modification is found at serine 78. Positions 101–143 are enriched in basic and acidic residues; the sequence is RAERAEQQRIRAEKERERQNRLAEEKARREEEDAKRRAEDDLK. The tract at residues 101–180 is disordered; the sequence is RAERAEQQRI…TAREMKKKIL (80 aa). Phosphoserine is present on residues serine 149, serine 156, and serine 157. Basic and acidic residues predominate over residues 171–180; sequence TAREMKKKIL. A Phosphoserine modification is found at serine 193. Tyrosine 209 carries the phosphotyrosine modification. A disordered region spans residues 235–259; it reads RIDQAQKHSKKAGATAKGKVGGRWK.

Belongs to the troponin T family.

In terms of biological role, troponin T is the tropomyosin-binding subunit of troponin, the thin filament regulatory complex which confers calcium-sensitivity to striated muscle actomyosin ATPase activity. The protein is Troponin T, fast skeletal muscle (Tnnt3) of Rattus norvegicus (Rat).